The following is a 206-amino-acid chain: CASP-like protein 4B2 (206 aa).

Low complexity-rich tracts occupy residues 1–12 (MAMVPADADAAA) and 24–36 (SSQN…AAAA). The tract at residues 1 to 42 (MAMVPADADAAAKPPPDVEKPDYSSQNGAPNSAAAAAGGGGG) is disordered. Residues 1 to 60 (MAMVPADADAAAKPPPDVEKPDYSSQNGAPNSAAAAAGGGGGGVVDSVVARWRREDMLDK) are Cytoplasmic-facing. The chain crosses the membrane as a helical span at residues 61-81 (SPLALHAAAAAFAFVALVLVA). Residues 82–99 (SNQHGDWMEFDRYQEYRY) lie on the Extracellular side of the membrane. A helical membrane pass occupies residues 100 to 120 (LLAIAALAFAYSLAQALRHAL). Residues 121–138 (RMRRGVDPVPTASGRLLD) are Cytoplasmic-facing. A helical membrane pass occupies residues 139-159 (FASDQVVAYLLMSALSAATPI). Residues 160 to 174 (TNRMRSAVINRFTDT) lie on the Extracellular side of the membrane. The helical transmembrane segment at 175–195 (TAAAISMAFLAFVSLALSAIV) threads the bilayer. The Cytoplasmic segment spans residues 196–206 (SGYKLSKQTYM).

It belongs to the Casparian strip membrane proteins (CASP) family. In terms of assembly, homodimer and heterodimers.

It is found in the cell membrane. In Oryza sativa subsp. japonica (Rice), this protein is CASP-like protein 4B2.